The sequence spans 114 residues: Probable 4-amino-4-deoxy-L-arabinose-phosphoundecaprenol flippase subunit ArnE (114 aa).

Helical transmembrane passes span 41 to 61 (PWLI…IYLL), 64 to 84 (LPLS…LIGS), and 94 to 114 (YHNW…GGLL). Residues 53-112 (GMLLWIYLLQRLPLSMAYPMLSINLVLVLIGSRLFFHEQISYHNWLGAGAIIIGALLLGG) enclose the EamA domain.

Belongs to the ArnE family. Heterodimer of ArnE and ArnF.

The protein resides in the cell inner membrane. It functions in the pathway bacterial outer membrane biogenesis; lipopolysaccharide biosynthesis. Its function is as follows. Translocates 4-amino-4-deoxy-L-arabinose-phosphoundecaprenol (alpha-L-Ara4N-phosphoundecaprenol) from the cytoplasmic to the periplasmic side of the inner membrane. This chain is Probable 4-amino-4-deoxy-L-arabinose-phosphoundecaprenol flippase subunit ArnE, found in Aeromonas salmonicida (strain A449).